A 490-amino-acid chain; its full sequence is MERKEIESLFTRAREIRALVIGDLMLDEYLWGKAERISPEAPVQVVDVTREDLRLGGAGNVVNNLVALGCQVAVCSVIGGDENGSHLRHAFTGKGVDLTGVFEDPLRLTSKKTRVIAANQQIVRIDRESRDEISLEFEEKVLDFIAAEAARFNVILVSDYLKGVLTPRVLEAVCAAGRRLGIPVVVDPKGSDYGKYRGATILTPNRKEAETASRMSIRTEEGLTRAAETLLAGLELDALLITRSEEGMSLFMQDGRTVHIPTVAREVYDVTGAGDTVLSVLSVGLACGLEFGEAARVANVAAGIAVGKLGTSTVSPGEIIAEIGHAHPDSDAKIKNLDALAAIVKAEKTRGKRLVFTNGCFDLLHVGHVKYLQKARTFGDLLVVGLNSDASVRRLKGAERPLIGEAERAHILAALDCVDFVVIFDEDTPLRLIETLQPQVLVKGGDYTPERVVGKEVVESYGGRVELVTFVDGKSTTNIIEKIRTGSIKE.

The segment at 1–330 (MERKEIESLF…AEIGHAHPDS (330 aa)) is ribokinase. Residue 205–208 (NRKE) coordinates ATP. Asp-275 is a catalytic residue. Residues 356–490 (FTNGCFDLLH…EKIRTGSIKE (135 aa)) are cytidylyltransferase.

In the N-terminal section; belongs to the carbohydrate kinase PfkB family. This sequence in the C-terminal section; belongs to the cytidylyltransferase family. In terms of assembly, homodimer.

The catalysed reaction is D-glycero-beta-D-manno-heptose 7-phosphate + ATP = D-glycero-beta-D-manno-heptose 1,7-bisphosphate + ADP + H(+). The enzyme catalyses D-glycero-beta-D-manno-heptose 1-phosphate + ATP + H(+) = ADP-D-glycero-beta-D-manno-heptose + diphosphate. It functions in the pathway nucleotide-sugar biosynthesis; ADP-L-glycero-beta-D-manno-heptose biosynthesis; ADP-L-glycero-beta-D-manno-heptose from D-glycero-beta-D-manno-heptose 7-phosphate: step 1/4. It participates in nucleotide-sugar biosynthesis; ADP-L-glycero-beta-D-manno-heptose biosynthesis; ADP-L-glycero-beta-D-manno-heptose from D-glycero-beta-D-manno-heptose 7-phosphate: step 3/4. Catalyzes the phosphorylation of D-glycero-D-manno-heptose 7-phosphate at the C-1 position to selectively form D-glycero-beta-D-manno-heptose-1,7-bisphosphate. Its function is as follows. Catalyzes the ADP transfer from ATP to D-glycero-beta-D-manno-heptose 1-phosphate, yielding ADP-D-glycero-beta-D-manno-heptose. This Geotalea uraniireducens (strain Rf4) (Geobacter uraniireducens) protein is Bifunctional protein HldE.